Reading from the N-terminus, the 266-residue chain is Electron transfer flavoprotein subunit beta (266 aa).

It belongs to the ETF beta-subunit/FixA family. As to quaternary structure, heterodimer of an alpha and a beta subunit. Requires FAD as cofactor. It depends on AMP as a cofactor.

Its function is as follows. The electron transfer flavoprotein serves as a specific electron acceptor for other dehydrogenases. It transfers the electrons to the main respiratory chain via ETF-ubiquinone oxidoreductase (ETF dehydrogenase). The sequence is that of Electron transfer flavoprotein subunit beta (etfB) from Mycobacterium bovis (strain ATCC BAA-935 / AF2122/97).